Reading from the N-terminus, the 396-residue chain is Alanine racemase (396 aa).

Lysine 46 (proton acceptor; specific for D-alanine) is an active-site residue. Lysine 46 bears the N6-(pyridoxal phosphate)lysine mark. Arginine 145 lines the substrate pocket. The active-site Proton acceptor; specific for L-alanine is the tyrosine 280. Residue methionine 328 coordinates substrate.

It belongs to the alanine racemase family. It depends on pyridoxal 5'-phosphate as a cofactor.

It carries out the reaction L-alanine = D-alanine. Its pathway is amino-acid biosynthesis; D-alanine biosynthesis; D-alanine from L-alanine: step 1/1. In terms of biological role, catalyzes the interconversion of L-alanine and D-alanine. May also act on other amino acids. The sequence is that of Alanine racemase (alr) from Brucella abortus (strain 2308).